The primary structure comprises 598 residues: Integrator complex subunit 11 (598 aa).

Zn(2+) contacts are provided by histidine 68, histidine 70, aspartate 72, histidine 73, histidine 157, and aspartate 178. An HXHXDH motif motif is present at residues 68–73 (HFHLDH). Residue glutamate 203 is part of the active site. Histidine 414 contacts Zn(2+). Residues 470 to 480 (PLPDAKRPRTM) carry the Nuclear localization signal motif.

It belongs to the metallo-beta-lactamase superfamily. RNA-metabolizing metallo-beta-lactamase-like family. INTS11 subfamily. In terms of assembly, component of the Integrator complex, composed of core subunits INTS1, INTS2, INTS3, INTS4, INTS5, INTS6, INTS7, INTS8, INTS9/RC74, INTS10, INTS11/CPSF3L, INTS12, INTS13, INTS14 and INTS15. The core complex associates with protein phosphatase 2A subunits PPP2CA and PPP2R1A, to form the Integrator-PP2A (INTAC) complex. INTS11 is part of the RNA endonuclease subcomplex, composed of INTS4, INTS9, INTS11 and inositol hexakisphosphate (InsP6). Zn(2+) is required as a cofactor.

It localises to the nucleus. The protein localises to the cytoplasm. In terms of biological role, RNA endonuclease component of the integrator complex, a multiprotein complex that terminates RNA polymerase II (Pol II) transcription in the promoter-proximal region of genes. The integrator complex provides a quality checkpoint during transcription elongation by driving premature transcription termination of transcripts that are unfavorably configured for transcriptional elongation: the complex terminates transcription by (1) catalyzing dephosphorylation of the C-terminal domain (CTD) of Pol II subunit POLR2A/RPB1 and SUPT5H/SPT5, (2) degrading the exiting nascent RNA transcript via endonuclease activity and (3) promoting the release of Pol II from bound DNA. The integrator complex is also involved in terminating the synthesis of non-coding Pol II transcripts, such as enhancer RNAs (eRNAs), small nuclear RNAs (snRNAs), telomerase RNAs and long non-coding RNAs (lncRNAs). Within the integrator complex, INTS11 constitutes the RNA endonuclease subunit that degrades exiting nascent RNA transcripts. This is Integrator complex subunit 11 (cpsf3l) from Danio rerio (Zebrafish).